Here is a 217-residue protein sequence, read N- to C-terminus: Small ribosomal subunit protein uS3c (217 aa).

A KH type-2 domain is found at 43-117 (IKNYVQKNKR…KLNIAITRIA (75 aa)).

The protein belongs to the universal ribosomal protein uS3 family. Part of the 30S ribosomal subunit.

Its subcellular location is the plastid. The protein localises to the chloroplast. This Platanus occidentalis (Sycamore) protein is Small ribosomal subunit protein uS3c (rps3).